The chain runs to 239 residues: Ribonuclease HII (239 aa).

The region spanning 18-231 (KIIVGLDEAG…SKNLLKEIEE (214 aa)) is the RNase H type-2 domain. A divalent metal cation is bound by residues Asp-24, Glu-25, and Asp-125.

The protein belongs to the RNase HII family. Requires Mn(2+) as cofactor. Mg(2+) is required as a cofactor.

Its subcellular location is the cytoplasm. It carries out the reaction Endonucleolytic cleavage to 5'-phosphomonoester.. In terms of biological role, endonuclease that specifically degrades the RNA of RNA-DNA hybrids. In Methanococcus maripaludis (strain C5 / ATCC BAA-1333), this protein is Ribonuclease HII.